A 743-amino-acid polypeptide reads, in one-letter code: Probable TonB-dependent receptor BfrD (743 aa).

The N-terminal stretch at methionine 1–alanine 30 is a signal peptide. Positions proline 62–lysine 168 constitute a TBDR plug domain. The TBDR beta-barrel domain occupies glutamine 173–tyrosine 743. Residues tyrosine 726–tyrosine 743 carry the TonB C-terminal box motif.

This sequence belongs to the TonB-dependent receptor family.

It is found in the cell outer membrane. Functionally, probably involved in iron transport. The chain is Probable TonB-dependent receptor BfrD (bfrD) from Bordetella pertussis (strain Tohama I / ATCC BAA-589 / NCTC 13251).